Consider the following 452-residue polypeptide: Translation initiation factor eIF2B subunit gamma (452 aa).

M1 carries the post-translational modification N-acetylmethionine. S260 bears the Phosphoserine mark.

The protein belongs to the eIF-2B gamma/epsilon subunits family. As to quaternary structure, component of the translation initiation factor 2B (eIF2B) complex which is a heterodecamer of two sets of five different subunits: alpha, beta, gamma, delta and epsilon. Subunits alpha, beta and delta comprise a regulatory subcomplex and subunits epsilon and gamma comprise a catalytic subcomplex. Within the complex, the hexameric regulatory complex resides at the center, with the two heterodimeric catalytic subcomplexes bound on opposite sides.

It is found in the cytoplasm. The protein localises to the cytosol. With respect to regulation, activated by the chemical integrated stress response (ISR) inhibitor ISRIB which stimulates guanine nucleotide exchange factor activity for both phosphorylated and unphosphorylated eIF2. Acts as a component of the translation initiation factor 2B (eIF2B) complex, which catalyzes the exchange of GDP for GTP on the eukaryotic initiation factor 2 (eIF2) complex gamma subunit. Its guanine nucleotide exchange factor activity is repressed when bound to eIF2 complex phosphorylated on the alpha subunit, thereby limiting the amount of methionyl-initiator methionine tRNA available to the ribosome and consequently global translation is repressed. The chain is Translation initiation factor eIF2B subunit gamma (EIF2B3) from Homo sapiens (Human).